The following is a 92-amino-acid chain: Alpha-defensin 25 (92 aa).

An N-terminal signal peptide occupies residues Met-1–Ala-19. Positions Asp-20–Glu-57 are excised as a propeptide. The segment covering Asn-24–Gln-40 has biased composition (basic and acidic residues). Positions Asn-24–Ser-53 are disordered. 3 cysteine pairs are disulfide-bonded: Cys-63-Cys-92, Cys-65-Cys-80, and Cys-70-Cys-91.

It belongs to the alpha-defensin family.

The protein localises to the secreted. In terms of biological role, may have microbicidal activities. This is Alpha-defensin 25 (Defa25) from Mus musculus (Mouse).